The chain runs to 150 residues: UPF0756 membrane protein STH2648 (150 aa).

The next 4 helical transmembrane spans lie at 13–33, 52–72, 85–105, and 111–131; these read ALGV…VLIL, AGLI…EVGW, LAAI…VTLL, and VIVG…GIPV.

It belongs to the UPF0756 family.

It is found in the cell membrane. In Symbiobacterium thermophilum (strain DSM 24528 / JCM 14929 / IAM 14863 / T), this protein is UPF0756 membrane protein STH2648.